Reading from the N-terminus, the 184-residue chain is Bacterial microcompartment shell protein PduT (184 aa).

2 consecutive BMC domains span residues 4–86 and 96–182; these read AIGI…PAIS and AVGI…RQMV. C38 provides a ligand contact to [4Fe-4S] cluster.

Belongs to the bacterial microcompartments protein family. As to quaternary structure, homotrimerizes to form a pseudohexamer with a large central pore, which is probably the binding site for the [4Fe-4S] center. Interacts with PduS. Originally suggested to be a homotetramer; this is incorrect. It depends on [4Fe-4S] cluster as a cofactor.

The protein resides in the bacterial microcompartment. It functions in the pathway polyol metabolism; 1,2-propanediol degradation. Its function is as follows. A minor shell protein of the bacterial microcompartment (BMC) dedicated to 1,2-propanediol (1,2-PD) degradation. Overexpression of this protein leads to cells with either deposits or having lamina-like structures in the cytoplasm. Not absolutely required to make artificial BMCs. May selectively transport specific metabolites. In terms of biological role, expression of a cosmid containing the full 21-gene pdu operon in E.coli allows E.coli to grow on 1,2-propanediol (1,2-PD) with the appearance of bacterial microcompartments (BMC) in its cytoplasm. Functionally, the 1,2-PD-specific bacterial microcompartment (BMC) concentrates low levels of 1,2-PD catabolic enzymes, concentrates volatile reaction intermediates thus enhancing pathway flux and keeps the level of toxic, mutagenic propionaldehyde low. This is Bacterial microcompartment shell protein PduT from Citrobacter freundii.